Here is a 367-residue protein sequence, read N- to C-terminus: High osmolarity signaling protein SHO1 (367 aa).

Residues Met1–Pro32 lie on the Cytoplasmic side of the membrane. The chain crosses the membrane as a helical span at residues Phe33–Ile53. The Extracellular portion of the chain corresponds to Ser54–Phe65. The N-linked (GlcNAc...) asparagine glycan is linked to Asn59. Residues Thr66–Phe86 form a helical membrane-spanning segment. Topologically, residues Asp87–Arg93 are cytoplasmic. Residues Ile94–Leu114 form a helical membrane-spanning segment. At Val115–Lys122 the chain is on the extracellular side. A helical membrane pass occupies residues Ala123–Tyr143. Topologically, residues Gly144–Arg367 are cytoplasmic. Ser166 bears the Phosphoserine mark. The disordered stretch occupies residues Asn253–Asp276. The segment covering Asp259–Thr272 has biased composition (low complexity). The SH3 domain maps to Asn300–Gly361.

Belongs to the SHO1 family. Forms homooligomers. Interacts (via the SH3 domain) with PBS2. Interacts with FUS1, STE11, STE50 and RNA polymerase II.

The protein localises to the cell membrane. It is found in the bud. The protein resides in the bud neck. Its subcellular location is the cell projection. Functionally, plasma membrane osmosensor that activates the high osmolarity glycerol (HOG) MAPK signaling pathway in response to high osmolarity. Detects changes in external osmolarity and activates PBS2 through the stimulation of STE11 and targets PBS2 to the plasma membrane. PBS2 activation leads to changes in glycerol production that helps to balance the intracellular and external osmotic pressures. Activates also HOG1 in response to heat stress and mediates resistance to oxidative stress. Involved in the regulation of the mating pathway. May be a receptor that feeds into the pseudohyphal growth pathway. The sequence is that of High osmolarity signaling protein SHO1 (SHO1) from Saccharomyces cerevisiae (strain YJM789) (Baker's yeast).